Here is a 195-residue protein sequence, read N- to C-terminus: ATP-dependent Clp protease proteolytic subunit (195 aa).

Serine 96 serves as the catalytic Nucleophile. Residue histidine 121 is part of the active site.

It belongs to the peptidase S14 family. Fourteen ClpP subunits assemble into 2 heptameric rings which stack back to back to give a disk-like structure with a central cavity, resembling the structure of eukaryotic proteasomes.

It is found in the cytoplasm. It carries out the reaction Hydrolysis of proteins to small peptides in the presence of ATP and magnesium. alpha-casein is the usual test substrate. In the absence of ATP, only oligopeptides shorter than five residues are hydrolyzed (such as succinyl-Leu-Tyr-|-NHMec, and Leu-Tyr-Leu-|-Tyr-Trp, in which cleavage of the -Tyr-|-Leu- and -Tyr-|-Trp bonds also occurs).. Functionally, cleaves peptides in various proteins in a process that requires ATP hydrolysis. Has a chymotrypsin-like activity. Plays a major role in the degradation of misfolded proteins. This chain is ATP-dependent Clp protease proteolytic subunit, found in Elusimicrobium minutum (strain Pei191).